We begin with the raw amino-acid sequence, 396 residues long: Elongation factor Tu (396 aa).

A tr-type G domain is found at 10–206 (KPHCNIGTIG…TVDAYIPQPE (197 aa)). Residues 19-26 (GHVDHGKT) are G1. Residue 19 to 26 (GHVDHGKT) coordinates GTP. Mg(2+) is bound at residue T26. Positions 60–64 (GITIS) are G2. The G3 stretch occupies residues 81-84 (DCPG). Residues 81 to 85 (DCPGH) and 136 to 139 (NKVD) each bind GTP. Residues 136–139 (NKVD) are G4. Positions 174 to 176 (SAL) are G5.

This sequence belongs to the TRAFAC class translation factor GTPase superfamily. Classic translation factor GTPase family. EF-Tu/EF-1A subfamily. Monomer.

It is found in the cytoplasm. The catalysed reaction is GTP + H2O = GDP + phosphate + H(+). Its function is as follows. GTP hydrolase that promotes the GTP-dependent binding of aminoacyl-tRNA to the A-site of ribosomes during protein biosynthesis. In Methylocella silvestris (strain DSM 15510 / CIP 108128 / LMG 27833 / NCIMB 13906 / BL2), this protein is Elongation factor Tu.